We begin with the raw amino-acid sequence, 391 residues long: DNA primase small subunit PriS (391 aa).

Catalysis depends on residues Asp98, Asp100, and Asp294.

Belongs to the eukaryotic-type primase small subunit family. In terms of assembly, heterodimer of a small subunit (PriS) and a large subunit (PriL). Mg(2+) serves as cofactor. The cofactor is Mn(2+).

Its function is as follows. Catalytic subunit of DNA primase, an RNA polymerase that catalyzes the synthesis of short RNA molecules used as primers for DNA polymerase during DNA replication. The small subunit contains the primase catalytic core and has DNA synthesis activity on its own. Binding to the large subunit stabilizes and modulates the activity, increasing the rate of DNA synthesis while decreasing the length of the DNA fragments, and conferring RNA synthesis capability. The DNA polymerase activity may enable DNA primase to also catalyze primer extension after primer synthesis. May also play a role in DNA repair. This chain is DNA primase small subunit PriS, found in Halobacterium salinarum (strain ATCC 29341 / DSM 671 / R1).